A 442-amino-acid chain; its full sequence is 5'-deoxyadenosine deaminase (442 aa).

Zn(2+) is bound by residues His-72 and His-74. Residues Glu-101 and His-193 each coordinate substrate. His-220 provides a ligand contact to Zn(2+). Substrate contacts are provided by Glu-223 and Asp-309. Asp-309 contributes to the Zn(2+) binding site.

Belongs to the metallo-dependent hydrolases superfamily. MTA/SAH deaminase family. In terms of assembly, homotetramer. Requires Zn(2+) as cofactor.

It carries out the reaction 5'-deoxyadenosine + H2O + H(+) = 5'-deoxyinosine + NH4(+). The enzyme catalyses S-adenosyl-L-homocysteine + H2O + H(+) = S-inosyl-L-homocysteine + NH4(+). It catalyses the reaction S-methyl-5'-thioadenosine + H2O + H(+) = S-methyl-5'-thioinosine + NH4(+). The catalysed reaction is adenosine + H2O + H(+) = inosine + NH4(+). It functions in the pathway amino-acid biosynthesis; S-adenosyl-L-methionine biosynthesis. Its function is as follows. Catalyzes the deamination of three SAM-derived enzymatic products, namely 5'-deoxyadenosine, S-adenosyl-L-homocysteine, and 5'-methylthioadenosine, to produce the inosine analogs. Can also deaminate adenosine. The preferred substrate for this enzyme is 5'-deoxyadenosine, but all these substrates are efficiently deaminated. Likely functions in a S-adenosyl-L-methionine (SAM) recycling pathway from S-adenosyl-L-homocysteine (SAH) produced from SAM-dependent methylation reactions. May also be involved in the recycling of 5'-deoxyadenosine, whereupon the 5'-deoxyribose moiety of 5'-deoxyinosine is further metabolized to deoxyhexoses used for the biosynthesis of aromatic amino acids in methanogens. The protein is 5'-deoxyadenosine deaminase of Methanoregula boonei (strain DSM 21154 / JCM 14090 / 6A8).